The sequence spans 112 residues: Frizzy aggregation protein FrzB (112 aa).

In terms of biological role, necessary for proper aggregation of cells to form fruiting bodies. FRZ genes define a system of signal transduction analogous to the enterobacterial chemotaxis systems. The chain is Frizzy aggregation protein FrzB (frzB) from Myxococcus xanthus.